The following is a 630-amino-acid chain: MNRLGGLSLPLRPVCLFCRAQTSLALSPLQGGQAVRSIATGRLRRRARMTLSKDVAKSSLKPKRTDRGKLGPFPNMNQTRARVREDPRSRSPAALKRSGETEEKPAMNTESPLYKALKMQTALAPISYGKRTAIKAKIAEITSFDAFTLLPIVRNSIFSQALPGIADAVPTPIQRVAIPRLLEDAPAKKQAKKVDDDEPQYEQYLLAAETGSGKTLAYLIPVIDAIKRQEIQEKEMEKKEEERKVREREENKKNQAFDLEPEIPPPSNAGRPRAIILVPTAELVAQVGAKLKAFAHTVKFRSGIISSNLTPRRIKSTLFNPAGIDILVSTPHLLASIAKTDPYVLSRVSHLVLDEADSLMDRSFLPISTEVISKAAPSLQKLIFCSATIPRSLDSQLRKLYPDIWRLTTPNLHAIPRRVQLGVVDIQKDPYRGNRNLACADVIWSIGKSGAGSDEAGSPWSEPKTKKILVFVNEREEADEVAQFLKSKGIDAHSFNRDSGTRKQEEILAEFTEPAAVPTAEEILLARKQQQRENINIPFVLPERTNRDTERRLDGVKVLVTTDIASRGIDTLALKTVILYHVPHTTIDFIHRLGRLGRMGKRGRAVVLVGKKDRKDVVKEVREVWFGLDS.

Residues 1 to 46 (MNRLGGLSLPLRPVCLFCRAQTSLALSPLQGGQAVRSIATGRLRRR) constitute a mitochondrion transit peptide. Residues 46-108 (RARMTLSKDV…GETEEKPAMN (63 aa)) form a disordered region. Positions 167–174 (DAVPTPIQ) match the Q motif motif. In terms of domain architecture, Helicase ATP-binding spans 195 to 407 (DDDEPQYEQY…RKLYPDIWRL (213 aa)). 208–215 (AETGSGKT) serves as a coordination point for ATP. A compositionally biased stretch (basic and acidic residues) spans 235-255 (EMEKKEEERKVREREENKKNQ). Positions 235-265 (EMEKKEEERKVREREENKKNQAFDLEPEIPP) are disordered. Positions 354–357 (DEAD) match the DEAD box motif. The region spanning 452 to 630 (GSDEAGSPWS…VREVWFGLDS (179 aa)) is the Helicase C-terminal domain.

Belongs to the DEAD box helicase family. MRH4 subfamily.

Its subcellular location is the mitochondrion. The enzyme catalyses ATP + H2O = ADP + phosphate + H(+). Functionally, ATP-binding RNA helicase involved in mitochondrial RNA metabolism. Required for maintenance of mitochondrial DNA. The protein is ATP-dependent RNA helicase mrh4, mitochondrial (mrh4) of Emericella nidulans (strain FGSC A4 / ATCC 38163 / CBS 112.46 / NRRL 194 / M139) (Aspergillus nidulans).